The primary structure comprises 352 residues: Ion-translocating oxidoreductase complex subunit D (352 aa).

The next 4 membrane-spanning stretches (helical) occupy residues 20 to 40 (IMLL…WFFG), 42 to 62 (GTLV…ALVL), 89 to 109 (IPPL…AIIA), and 123 to 143 (PAMI…TSWL). Threonine 187 is subject to FMN phosphoryl threonine. The next 5 helical transmembrane spans lie at 214 to 234 (ILAG…GLWL), 242 to 262 (WHIP…GWLF), 267 to 287 (LAAP…FFIL), 301 to 321 (LIFG…GGYP), and 322 to 342 (DGVA…DYYT).

It belongs to the NqrB/RnfD family. In terms of assembly, the complex is composed of six subunits: RsxA, RsxB, RsxC, RsxD, RsxE and RsxG. It depends on FMN as a cofactor.

The protein localises to the cell inner membrane. Its function is as follows. Part of a membrane-bound complex that couples electron transfer with translocation of ions across the membrane. Required to maintain the reduced state of SoxR. This chain is Ion-translocating oxidoreductase complex subunit D, found in Escherichia coli (strain ATCC 8739 / DSM 1576 / NBRC 3972 / NCIMB 8545 / WDCM 00012 / Crooks).